The chain runs to 453 residues: Ribosome biogenesis protein SSF2 (453 aa).

The segment covering 1 to 11 (MAKRRQKKRTH) has biased composition (basic residues). Disordered stretches follow at residues 1–22 (MAKRRQKKRTHAQITPEQERDI), 275–327 (KAKH…KAIK), and 373–453 (AKMR…SEVE). Residues 26–348 (MVIRVGQTSL…LVKIEDGICS (323 aa)) form the Brix domain. Over residues 373-398 (AKMRLKEQRRKEQEENIAKKKAVKDA) the composition is skewed to basic and acidic residues. Basic residues predominate over residues 399–409 (KKQRKLERRKA). Residues 440-453 (VPEDLDSDLFSEVE) are compositionally biased toward acidic residues.

Part of a complex that includes BRX1, RPF1, RPF2 and SSF1 or SSF2.

It localises to the nucleus. The protein localises to the nucleolus. Required for biogenesis of the 60S ribosomal subunit. The sequence is that of Ribosome biogenesis protein SSF2 (SSF2) from Saccharomyces cerevisiae (strain ATCC 204508 / S288c) (Baker's yeast).